A 230-amino-acid polypeptide reads, in one-letter code: Cytidylate kinase (230 aa).

12-20 (GPSGAGKGT) contacts ATP.

Belongs to the cytidylate kinase family. Type 1 subfamily.

The protein resides in the cytoplasm. The enzyme catalyses CMP + ATP = CDP + ADP. The catalysed reaction is dCMP + ATP = dCDP + ADP. The chain is Cytidylate kinase from Shewanella sp. (strain W3-18-1).